The sequence spans 248 residues: Triosephosphate isomerase (248 aa).

The substrate site is built by Asn11 and Lys13. His95 (electrophile) is an active-site residue. Glu165 serves as the catalytic Proton acceptor.

This sequence belongs to the triosephosphate isomerase family. Homodimer.

The protein resides in the cytoplasm. It catalyses the reaction dihydroxyacetone phosphate = methylglyoxal + phosphate. It carries out the reaction D-glyceraldehyde 3-phosphate = dihydroxyacetone phosphate. Its pathway is carbohydrate degradation; glycolysis; D-glyceraldehyde 3-phosphate from glycerone phosphate: step 1/1. The protein operates within carbohydrate biosynthesis; gluconeogenesis. Functionally, triosephosphate isomerase is an extremely efficient metabolic enzyme that catalyzes the interconversion between dihydroxyacetone phosphate (DHAP) and D-glyceraldehyde-3-phosphate (G3P) in glycolysis and gluconeogenesis. It is also responsible for the non-negligible production of methylglyoxal a reactive cytotoxic side-product that modifies and can alter proteins, DNA and lipids. The polypeptide is Triosephosphate isomerase (tpi1) (Xenopus tropicalis (Western clawed frog)).